Here is a 348-residue protein sequence, read N- to C-terminus: Sulfate/thiosulfate import ATP-binding protein CysA (348 aa).

The region spanning 3-233 (ILIDNISKKF…PATPFVFSLL (231 aa)) is the ABC transporter domain. An ATP-binding site is contributed by 35–42 (GPSGSGKS).

It belongs to the ABC transporter superfamily. Sulfate/tungstate importer (TC 3.A.1.6) family.

Its subcellular location is the plastid. It is found in the chloroplast. The enzyme catalyses sulfate(out) + ATP + H2O = sulfate(in) + ADP + phosphate + H(+). It catalyses the reaction thiosulfate(out) + ATP + H2O = thiosulfate(in) + ADP + phosphate + H(+). Part of the ABC transporter complex involved in sulfate/thiosulfate import. Responsible for energy coupling to the transport system. The polypeptide is Sulfate/thiosulfate import ATP-binding protein CysA (Mesostigma viride (Green alga)).